A 94-amino-acid chain; its full sequence is Small ribosomal subunit protein bS6 (94 aa).

Belongs to the bacterial ribosomal protein bS6 family.

Its function is as follows. Binds together with bS18 to 16S ribosomal RNA. The protein is Small ribosomal subunit protein bS6 of Clostridium botulinum (strain Loch Maree / Type A3).